The following is a 928-amino-acid chain: DENN domain-containing protein 2C (928 aa).

2 disordered regions span residues lysine 67 to threonine 105 and glutamine 245 to arginine 266. Positions glutamate 85–threonine 105 are enriched in basic and acidic residues. The residue at position 271 (serine 271) is a Phosphoserine. Positions lysine 428–lysine 456 are disordered. Positions glutamate 492–threonine 641 constitute a uDENN domain. In terms of domain architecture, cDENN spans arginine 663 to glutamate 796. Residues arginine 798–valine 888 form the dDENN domain.

Functionally, guanine nucleotide exchange factor (GEF) which may activate RAB9A and RAB9B. Promotes the exchange of GDP to GTP, converting inactive GDP-bound Rab proteins into their active GTP-bound form. This chain is DENN domain-containing protein 2C (DENND2C), found in Homo sapiens (Human).